Here is a 142-residue protein sequence, read N- to C-terminus: Large ribosomal subunit protein uL11 (142 aa).

This sequence belongs to the universal ribosomal protein uL11 family. In terms of assembly, part of the ribosomal stalk of the 50S ribosomal subunit. Interacts with L10 and the large rRNA to form the base of the stalk. L10 forms an elongated spine to which L12 dimers bind in a sequential fashion forming a multimeric L10(L12)X complex. Post-translationally, one or more lysine residues are methylated.

Functionally, forms part of the ribosomal stalk which helps the ribosome interact with GTP-bound translation factors. In Xanthomonas axonopodis pv. citri (strain 306), this protein is Large ribosomal subunit protein uL11.